Here is a 428-residue protein sequence, read N- to C-terminus: Glutamate-1-semialdehyde 2,1-aminomutase (428 aa).

Lys265 carries the N6-(pyridoxal phosphate)lysine modification.

The protein belongs to the class-III pyridoxal-phosphate-dependent aminotransferase family. HemL subfamily. Homodimer. Requires pyridoxal 5'-phosphate as cofactor.

It is found in the cytoplasm. It carries out the reaction (S)-4-amino-5-oxopentanoate = 5-aminolevulinate. It participates in porphyrin-containing compound metabolism; protoporphyrin-IX biosynthesis; 5-aminolevulinate from L-glutamyl-tRNA(Glu): step 2/2. The chain is Glutamate-1-semialdehyde 2,1-aminomutase from Shewanella sediminis (strain HAW-EB3).